The chain runs to 292 residues: NAD kinase (292 aa).

D72 functions as the Proton acceptor in the catalytic mechanism. Residues 72–73, 146–147, H157, R174, D176, and 187–192 contribute to the NAD(+) site; these read DG, NE, and TAYSLS.

The protein belongs to the NAD kinase family. The cofactor is a divalent metal cation.

Its subcellular location is the cytoplasm. The enzyme catalyses NAD(+) + ATP = ADP + NADP(+) + H(+). In terms of biological role, involved in the regulation of the intracellular balance of NAD and NADP, and is a key enzyme in the biosynthesis of NADP. Catalyzes specifically the phosphorylation on 2'-hydroxyl of the adenosine moiety of NAD to yield NADP. The polypeptide is NAD kinase (Shewanella loihica (strain ATCC BAA-1088 / PV-4)).